Reading from the N-terminus, the 75-residue chain is Large ribosomal subunit protein bL31 (75 aa).

Zn(2+) is bound by residues C16, C18, C38, and C41.

It belongs to the bacterial ribosomal protein bL31 family. Type A subfamily. Part of the 50S ribosomal subunit. Zn(2+) is required as a cofactor.

Its function is as follows. Binds the 23S rRNA. This chain is Large ribosomal subunit protein bL31, found in Nocardioides sp. (strain ATCC BAA-499 / JS614).